A 507-amino-acid polypeptide reads, in one-letter code: Sensor protein CseC (507 aa).

The segment at 1–42 is disordered; the sequence is MRGFFRQRRSVSPPGHPYDRTGPGEHAGPGARTGPGGRPRVL. Positions 25–37 are enriched in gly residues; sequence EHAGPGARTGPGG. Transmembrane regions (helical) follow at residues 60-80 and 183-203; these read LSAA…LVVH and ALVI…VLIG. Residues 204–260 enclose the HAMP domain; sequence GQLSRRLREAAAAANRVASGEPDVRVRDAIGGVVRDETDDVARAVDAMADALQQRIE. Positions 268 to 470 constitute a Histidine kinase domain; that stretch reads DIAHELRTPV…VAVLWLPEHA (203 aa). H271 carries the phosphohistidine; by autocatalysis modification. Residues 472 to 507 form a disordered region; that stretch reads TNTGSYPMLPDRSKSGASSSARDMSREASQGMSRKP. A compositionally biased stretch (polar residues) spans 486–507; sequence SGASSSARDMSREASQGMSRKP.

It is found in the cell membrane. It carries out the reaction ATP + protein L-histidine = ADP + protein N-phospho-L-histidine.. Functionally, member of the two-component regulatory system CseB/CseC involved in the stability of the cell envelope, through activation of transcription of RNA polymerase sigma-E factor. CseC functions as a membrane-associated protein kinase that phosphorylates CseB in response to changes in the cell envelope. The protein is Sensor protein CseC (cseC) of Streptomyces coelicolor (strain ATCC BAA-471 / A3(2) / M145).